A 324-amino-acid polypeptide reads, in one-letter code: Probable pectinesterase A (324 aa).

The N-terminal stretch at 1–19 (MHGSLLKLALLSFSLASSA) is a signal peptide. Position 142 (Gln-142) interacts with substrate. Asp-165 serves as the catalytic Proton donor. Asp-186 acts as the Nucleophile in catalysis. Residues Arg-246 and Trp-248 each coordinate substrate. Asn-285 carries N-linked (GlcNAc...) asparagine glycosylation.

This sequence belongs to the pectinesterase family.

The protein resides in the secreted. It carries out the reaction [(1-&gt;4)-alpha-D-galacturonosyl methyl ester](n) + n H2O = [(1-&gt;4)-alpha-D-galacturonosyl](n) + n methanol + n H(+). It participates in glycan metabolism; pectin degradation; 2-dehydro-3-deoxy-D-gluconate from pectin: step 1/5. Involved in maceration and soft-rotting of plant tissue. This is Probable pectinesterase A (pmeA) from Aspergillus flavus (strain ATCC 200026 / FGSC A1120 / IAM 13836 / NRRL 3357 / JCM 12722 / SRRC 167).